The chain runs to 2596 residues: Cadherin EGF LAG seven-pass G-type receptor fmi-1 (2596 aa).

Positions M1–S22 are cleaved as a signal peptide. At E23–M2229 the chain is on the extracellular side. Cadherin domains are found at residues Q166–F270, E271–F375, A376–L479, I480–F581, D582–F682, N683–F784, T785–F892, and E893–L1000. 6 N-linked (GlcNAc...) asparagine glycosylation sites follow: N381, N387, N562, N587, N765, and N824. 2 N-linked (GlcNAc...) asparagine glycosylation sites follow: N1030 and N1263. The 37-residue stretch at R1251–E1287 folds into the EGF-like 1 domain. 12 disulfide bridges follow: C1255–C1266, C1260–C1275, C1277–C1286, C1497–C1526, C1533–C1546, C1540–C1555, C1557–C1567, C1709–C1732, C1738–C1750, C1744–C1759, C1761–C1770, and C1780–C1785. Positions S1333–C1526 constitute a Laminin G-like 1 domain. In terms of domain architecture, EGF-like 2 spans R1529–V1568. The region spanning R1577–C1732 is the Laminin G-like 2 domain. EGF-like domains lie at V1734–L1771 and V1776–Q1808. N1789 is a glycosylation site (N-linked (GlcNAc...) asparagine). A disulfide bridge links C1798 with C1807. Residues N1965, N1992, N2152, N2195, and N2228 are each glycosylated (N-linked (GlcNAc...) asparagine). Residues E2054–S2219 form the GAIN-B domain. A disulfide bridge links C2174 with C2201. The interval C2174–S2219 is GPS. Residues T2230–L2250 traverse the membrane as a helical segment. Residues S2251 to R2261 are Cytoplasmic-facing. A helical transmembrane segment spans residues I2262–A2282. At I2283–N2292 the chain is on the extracellular side. Residues A2293–I2313 traverse the membrane as a helical segment. Residues Y2314 to L2326 lie on the Cytoplasmic side of the membrane. The helical transmembrane segment at T2327–V2347 threads the bilayer. Residues T2348–H2356 lie on the Extracellular side of the membrane. The chain crosses the membrane as a helical span at residues L2357–A2377. Residues A2378–R2401 are Cytoplasmic-facing. A helical transmembrane segment spans residues A2402–F2422. The Extracellular portion of the chain corresponds to A2423–Q2437. The chain crosses the membrane as a helical span at residues S2438–T2458. Topologically, residues K2459 to E2596 are cytoplasmic.

The protein belongs to the G-protein coupled receptor 2 family. LN-TM7 subfamily. In terms of tissue distribution, expressed in a region of neuropil around the nerve ring and the ventral cord (at protein level). Expressed in the head, tail, ventral cord, nerve ring and neurons including HSN neurons. Expressed in DA, VA, and VB and weakly in the DB cholinergic neurons. Not expressed in ventral D-type GABAergic motorneurons.

The protein resides in the cell membrane. The protein localises to the cell projection. Its subcellular location is the axon. It localises to the dendrite. In terms of biological role, during ventral cord development, required for axon fasciculation and navigation, mediating both pioneer and follower axon extension, guidance and track formation. Acts in CEPsh glia and SubL neurons to guide follower axons into the nerve ring. Promotes motorneuron development by positively regulating the extension of the anterior neurite of ventral D-type GABAergic motorneurons along the anterior-posterior axis of the ventral nerve cord. Plays a role in synaptogenesis by regulating synaptic vesicle accumulation at GABAergic and cholinergic neuromuscular junctions. The chain is Cadherin EGF LAG seven-pass G-type receptor fmi-1 from Caenorhabditis elegans.